The following is a 376-amino-acid chain: Glutamate 5-kinase (376 aa).

Lys-23 contacts ATP. Ser-63, Asp-150, and Asn-162 together coordinate substrate. ATP-binding positions include 182–183 (SD) and 222–228 (TGGMASK). The 75-residue stretch at 284-358 (GGALRIDAGA…GKQTAQLPEG (75 aa)) folds into the PUA domain.

It belongs to the glutamate 5-kinase family.

Its subcellular location is the cytoplasm. The enzyme catalyses L-glutamate + ATP = L-glutamyl 5-phosphate + ADP. Its pathway is amino-acid biosynthesis; L-proline biosynthesis; L-glutamate 5-semialdehyde from L-glutamate: step 1/2. Its function is as follows. Catalyzes the transfer of a phosphate group to glutamate to form L-glutamate 5-phosphate. In Corynebacterium diphtheriae (strain ATCC 700971 / NCTC 13129 / Biotype gravis), this protein is Glutamate 5-kinase.